Reading from the N-terminus, the 330-residue chain is Low affinity immunoglobulin gamma Fc region receptor II (330 aa).

The signal sequence occupies residues 1 to 29; sequence MESNWTVHVFSRTLCHMLLWTAVLNLAAG. Residues 30 to 210 are Extracellular-facing; sequence THDLPKAVVK…QGPKSSRSLP (181 aa). 2 consecutive Ig-like C2-type domains span residues 50 to 106 and 131 to 189; these read EDTV…QTRL and GETI…LGRT. 2 disulfides stabilise this stretch: Cys-57–Cys-99 and Cys-138–Cys-182. N-linked (GlcNAc...) asparagine glycans are attached at residues Asn-65, Asn-92, Asn-166, and Asn-173. A helical transmembrane segment spans residues 211–231; the sequence is VLTIVAAVTGIAVAAIVIILV. The Cytoplasmic portion of the chain corresponds to 232-330; sequence SLVYLKKKQV…ETEHDYQNHI (99 aa). Residues 261–330 are disordered; the sequence is VGEYRQPSGG…ETEHDYQNHI (70 aa). At Tyr-290 the chain carries Phosphotyrosine. The short motif at 307–312 is the ITIM motif element; sequence ITYSLL. Position 309 is a phosphotyrosine; by SRC-type Tyr-kinases (Tyr-309). The residue at position 326 (Tyr-326) is a Phosphotyrosine.

As to quaternary structure, interacts with FGR. Interacts with LYN. Post-translationally, glycosylated. In terms of processing, when coaggregated to BCR, isoform IIB1 and isoform IIB1' become tyrosine phosphorylated and bind to the SH2 domains of the protein tyrosine phosphatase PTPC1. Phosphorylated by SRC-type Tyr-kinases such as LYN, BLK, FYN and SYK. In terms of tissue distribution, widely expressed by cells of hemopoietic origin. The isoforms are differentially expressed. Isoform IIB1 is preferentially expressed by cells of the lymphoid lineage, isoform IIB2 by cells of the myeloid lineage, and isoform IIB3 is released by macrophages and is present in the serum. Isoform IIB1' is expressed in myeloid and lymphoid cell lines, in normal spleen cells, and in resting or LPS-activated B-cells but is not detected in mesenteric lymph node cells.

It localises to the cell membrane. The protein localises to the cytoplasm. The protein resides in the cytoskeleton. Its subcellular location is the secreted. Its function is as follows. Receptor for the Fc region of complexed immunoglobulins gamma. Low affinity receptor. Involved in a variety of effector and regulatory functions such as phagocytosis of antigen-antibody complexes from the circulation and modulation of antibody production by B-cells. Isoform IIB1 and isoform IIB1' form caps but fail to mediate endocytosis or phagocytosis. Isoform IIB2 can mediate the endocytosis of soluble immune complexes via clathrin-coated pits. Isoform IIB1 and isoform IIB2 can down-regulate B-cell, T-cell, and mast cell activation when coaggregated to B-cell receptors for AG (BCR), T-cell receptors for AG (TCR), and Fc receptors, respectively. The sequence is that of Low affinity immunoglobulin gamma Fc region receptor II (Fcgr2) from Mus musculus (Mouse).